The following is a 165-amino-acid chain: 2-C-methyl-D-erythritol 2,4-cyclodiphosphate synthase (165 aa).

Positions 9 and 11 each coordinate a divalent metal cation. 4-CDP-2-C-methyl-D-erythritol 2-phosphate is bound by residues 9–11 (DVH) and 35–36 (HS). Residue His43 participates in a divalent metal cation binding. 4-CDP-2-C-methyl-D-erythritol 2-phosphate contacts are provided by residues 57 to 59 (DIG), 101 to 107 (AQAPKML), 133 to 136 (TTTE), Phe140, and Arg143.

This sequence belongs to the IspF family. As to quaternary structure, homotrimer. The cofactor is a divalent metal cation.

It carries out the reaction 4-CDP-2-C-methyl-D-erythritol 2-phosphate = 2-C-methyl-D-erythritol 2,4-cyclic diphosphate + CMP. It functions in the pathway isoprenoid biosynthesis; isopentenyl diphosphate biosynthesis via DXP pathway; isopentenyl diphosphate from 1-deoxy-D-xylulose 5-phosphate: step 4/6. In terms of biological role, involved in the biosynthesis of isopentenyl diphosphate (IPP) and dimethylallyl diphosphate (DMAPP), two major building blocks of isoprenoid compounds. Catalyzes the conversion of 4-diphosphocytidyl-2-C-methyl-D-erythritol 2-phosphate (CDP-ME2P) to 2-C-methyl-D-erythritol 2,4-cyclodiphosphate (ME-CPP) with a corresponding release of cytidine 5-monophosphate (CMP). This chain is 2-C-methyl-D-erythritol 2,4-cyclodiphosphate synthase, found in Pseudoalteromonas translucida (strain TAC 125).